The primary structure comprises 938 residues: Isoleucine--tRNA ligase (938 aa).

A 'HIGH' region motif is present at residues 58-68 (PYANGSIHIGH). Lysine 183 is modified (N6-acetyllysine). Position 561 (glutamate 561) interacts with L-isoleucyl-5'-AMP. The 'KMSKS' region signature appears at 602 to 606 (KMSKS). An ATP-binding site is contributed by lysine 605. Residues cysteine 901, cysteine 904, cysteine 921, and cysteine 924 each contribute to the Zn(2+) site.

This sequence belongs to the class-I aminoacyl-tRNA synthetase family. IleS type 1 subfamily. In terms of assembly, monomer. The cofactor is Zn(2+).

It is found in the cytoplasm. The catalysed reaction is tRNA(Ile) + L-isoleucine + ATP = L-isoleucyl-tRNA(Ile) + AMP + diphosphate. Its function is as follows. Catalyzes the attachment of isoleucine to tRNA(Ile). As IleRS can inadvertently accommodate and process structurally similar amino acids such as valine, to avoid such errors it has two additional distinct tRNA(Ile)-dependent editing activities. One activity is designated as 'pretransfer' editing and involves the hydrolysis of activated Val-AMP. The other activity is designated 'posttransfer' editing and involves deacylation of mischarged Val-tRNA(Ile). The polypeptide is Isoleucine--tRNA ligase (Escherichia coli O6:K15:H31 (strain 536 / UPEC)).